A 348-amino-acid chain; its full sequence is Flap endonuclease 1 (348 aa).

The tract at residues 1–98 (MGLAELRELI…ETLERRRERK (98 aa)) is N-domain. The Mg(2+) site is built by Asp28, Asp80, Glu149, Glu151, Asp170, Asp172, and Asp234. The segment at 113 to 256 (EREKYARQVA…RALQLIRKYG (144 aa)) is I-domain. An interaction with PCNA region spans residues 340-348 (RQETLDAFF).

Belongs to the XPG/RAD2 endonuclease family. FEN1 subfamily. In terms of assembly, interacts with PCNA. PCNA stimulates the nuclease activity without altering cleavage specificity. The cofactor is Mg(2+).

Functionally, structure-specific nuclease with 5'-flap endonuclease and 5'-3' exonuclease activities involved in DNA replication and repair. During DNA replication, cleaves the 5'-overhanging flap structure that is generated by displacement synthesis when DNA polymerase encounters the 5'-end of a downstream Okazaki fragment. Binds the unpaired 3'-DNA end and kinks the DNA to facilitate 5' cleavage specificity. Cleaves one nucleotide into the double-stranded DNA from the junction in flap DNA, leaving a nick for ligation. Also involved in the base excision repair (BER) pathway. Acts as a genome stabilization factor that prevents flaps from equilibrating into structures that lead to duplications and deletions. Also possesses 5'-3' exonuclease activity on nicked or gapped double-stranded DNA. This chain is Flap endonuclease 1, found in Methanopyrus kandleri (strain AV19 / DSM 6324 / JCM 9639 / NBRC 100938).